Here is an 88-residue protein sequence, read N- to C-terminus: Translation initiation factor IF-1 1 (88 aa).

Positions 1-72 constitute an S1-like domain; the sequence is MAKEELIELD…TKGRINFRHK (72 aa).

This sequence belongs to the IF-1 family. Component of the 30S ribosomal translation pre-initiation complex which assembles on the 30S ribosome in the order IF-2 and IF-3, IF-1 and N-formylmethionyl-tRNA(fMet); mRNA recruitment can occur at any time during PIC assembly.

Its subcellular location is the cytoplasm. Functionally, one of the essential components for the initiation of protein synthesis. Stabilizes the binding of IF-2 and IF-3 on the 30S subunit to which N-formylmethionyl-tRNA(fMet) subsequently binds. Helps modulate mRNA selection, yielding the 30S pre-initiation complex (PIC). Upon addition of the 50S ribosomal subunit IF-1, IF-2 and IF-3 are released leaving the mature 70S translation initiation complex. In Burkholderia mallei (strain ATCC 23344), this protein is Translation initiation factor IF-1 1.